The chain runs to 199 residues: FMN-dependent NADH:quinone oxidoreductase 2 (199 aa).

Residues serine 10, 17–19 (SDS), and 135–138 (TKGG) contribute to the FMN site.

The protein belongs to the azoreductase type 1 family. Homodimer. The cofactor is FMN.

It carries out the reaction 2 a quinone + NADH + H(+) = 2 a 1,4-benzosemiquinone + NAD(+). It catalyses the reaction N,N-dimethyl-1,4-phenylenediamine + anthranilate + 2 NAD(+) = 2-(4-dimethylaminophenyl)diazenylbenzoate + 2 NADH + 2 H(+). Functionally, quinone reductase that provides resistance to thiol-specific stress caused by electrophilic quinones. Its function is as follows. Also exhibits azoreductase activity. Catalyzes the reductive cleavage of the azo bond in aromatic azo compounds to the corresponding amines. This chain is FMN-dependent NADH:quinone oxidoreductase 2, found in Mesoplasma florum (strain ATCC 33453 / NBRC 100688 / NCTC 11704 / L1) (Acholeplasma florum).